The following is a 434-amino-acid chain: Adenylosuccinate synthetase (434 aa).

GTP contacts are provided by residues 25–31 and 53–55; these read GDEGKGK and GHT. Asp-26 functions as the Proton acceptor in the catalytic mechanism. Positions 26 and 53 each coordinate Mg(2+). Residues 26–29, 51–54, Thr-142, Arg-156, Asn-233, Thr-248, and Arg-312 each bind IMP; these read DEGK and NAGH. Catalysis depends on His-54, which acts as the Proton donor. 308–314 is a binding site for substrate; the sequence is VTTGRKR. Residues Arg-314, 340–342, and 422–424 each bind GTP; these read KLD and GVG.

It belongs to the adenylosuccinate synthetase family. Homodimer. Mg(2+) serves as cofactor.

Its subcellular location is the cytoplasm. The enzyme catalyses IMP + L-aspartate + GTP = N(6)-(1,2-dicarboxyethyl)-AMP + GDP + phosphate + 2 H(+). The protein operates within purine metabolism; AMP biosynthesis via de novo pathway; AMP from IMP: step 1/2. Its activity is regulated as follows. Competitively Inhibited by GMP. Allosterically inhibited by AMP. Functionally, plays an important role in the de novo pathway and in the salvage pathway of purine nucleotide biosynthesis. Catalyzes the first committed step in the biosynthesis of AMP from IMP. This Schizosaccharomyces pombe (strain 972 / ATCC 24843) (Fission yeast) protein is Adenylosuccinate synthetase (ade2).